Here is a 417-residue protein sequence, read N- to C-terminus: Pelargonidin 3-O-(6-caffeoylglucoside) 5-O-(6-O-malonylglucoside) 4'''-malonyltransferase (417 aa).

Catalysis depends on proton acceptor residues His147 and Asp360.

It belongs to the plant acyltransferase family. As to quaternary structure, monomer. Expressed at higher level in recently opened, fully pigmented flowers.

The catalysed reaction is 4'''-demalonylsalvianin + malonyl-CoA = salvianin + CoA. Its pathway is pigment biosynthesis; anthocyanin biosynthesis. With respect to regulation, inhibited by the following metal ions: Cd(2+), Cu(2+), Fe(2+), Hg(2+) and Zn(2+). Activity is strongly inhibited by CoA-SH and partially inhibited by acetyl-CoA, caffeic acid and bisdemalonylsalvianin. Catalyzes the transfer of the malonyl group from malonyl-CoA to the 4'''-hydroxyl group of the 5-glucosyl moiety of anthocyanins. Anthocyanins are ubiquitous colored pigments that are responsible for petal color. The sequence is that of Pelargonidin 3-O-(6-caffeoylglucoside) 5-O-(6-O-malonylglucoside) 4'''-malonyltransferase from Salvia splendens (Scarlet sage).